A 1802-amino-acid chain; its full sequence is Signaling mucin HKR1 (1802 aa).

An N-terminal signal peptide occupies residues 1-21 (MVSLKIKKILLLVSLLNAIEA). At 22–1485 (YSNDTIYSTS…SASAGKYAVK (1464 aa)) the chain is on the extracellular side. Asn-24 carries N-linked (GlcNAc...) asparagine glycosylation. 2 disordered regions span residues 47–176 (ISST…PREI) and 261–311 (YSSS…VSRP). Positions 54–81 (NKENAITSSSETTTMAGQYGESGSTTIM) are enriched in polar residues. The span at 88–107 (TSSQYISVTTTTQTSDTMSS) shows a compositional bias: low complexity. Residues 113 to 143 (EIATPSSSIVPTPLQSYSDESQISQTLSHNP) show a composition bias toward polar residues. Composition is skewed to low complexity over residues 145-172 (SVAESDSDTTSSESSSSVIISTSDSSAV) and 261-302 (YSSS…SESS). The stretch at 453–480 (SVPVAVSSTYTSSPSASVVVPSAYASSP) is one 1; approximate repeat. Positions 453–788 (SVPVAVSSTY…VLSSTSTSSP (336 aa)) are 12 X 28 AA tandem repeats of S-[AV]-[P]-V-A-V-S-S-T-Y-T-S-S-P-S-A-P-A-A-I-S-S-T-Y-T-S-S-P. Repeat copies occupy residues 481 to 508 (SVPVAVSSTYTSSPSAPAAISSTYTSSP), 509 to 536 (SAPVAVSSTYTSSPSAPAAISSTYTSSP), 537 to 564 (SAPVAVSSTYTSSPSAPAAISSTYTSSP), 565 to 592 (SAPVAVSSTYTSSPSAPVAISSTYTSSP), 593 to 620 (SVPVAVSSTYTSSPSAPAAISSTYTSSP), 621 to 648 (SAPVAVSSTYTSSPSAPAAISSTYTSSP), 649 to 676 (SVPVAVSSTYTSSPSAPAAISSTYTSSP), 677 to 704 (SVPVAVSSTYTSSPSAPAAISSTYTSSP), 705 to 732 (SAPVAVSSTYTSSPSAPAAISSTYTSSP), 733 to 760 (SAPVAVSSTYTSSPSAPAAISSTYTSSP), and 761 to 788 (SAPVAVSSTYTSSPSALVVLSSTSTSSP). Disordered regions lie at residues 961–984 (SLQSQLSSSTKNPYDTANKNTETS) and 1067–1165 (ETIP…SYSR). Polar residues-rich tracts occupy residues 970–984 (TKNPYDTANKNTETS) and 1071–1123 (ASKS…TNTK). The segment covering 1136-1165 (TMGENGEETGLTTTKTQYKSSSETSGSYSR) has biased composition (low complexity). N-linked (GlcNAc...) asparagine glycans are attached at residues Asn-1252, Asn-1293, Asn-1342, and Asn-1400. A helical transmembrane segment spans residues 1486-1506 (IIIFLIVLTIGVLLWLFVAFF). Residues 1507 to 1802 (AFRHRNILLK…KQQNHQTTKI (296 aa)) lie on the Cytoplasmic side of the membrane. The disordered stretch occupies residues 1534–1559 (ESTELSRSSSGNQVYNEKPPESENES).

The protein belongs to the HKR1/MSB2 family. Post-translationally, could be O-glycosylated in the serine/threonine-rich domain.

The protein localises to the cell membrane. Functionally, plasma membrane signaling mucin that promotes activation of the MAPK for the filamentous growth pathway. May regulate beta-glucan synthesis. Overexpression provides resistance to HM-1 killer toxin. The sequence is that of Signaling mucin HKR1 (HKR1) from Saccharomyces cerevisiae (strain ATCC 204508 / S288c) (Baker's yeast).